We begin with the raw amino-acid sequence, 785 residues long: Polyribonucleotide nucleotidyltransferase (785 aa).

2 residues coordinate Mg(2+): Asp516 and Asp522. One can recognise a KH domain in the interval 582–641 (PRVTTVKIPVDKIGMVIGPKGQTINAIQDETGAEISIEDDGTIYVGATNGPAAQAAVERI). In terms of domain architecture, S1 motif spans 653 to 722 (GDRFLGTVVK…QRGKIYLDKV (70 aa)). Residues 722 to 785 (VRPEGAEAPA…SRPRRRTRRS (64 aa)) form a disordered region. Residues 734–764 (AAERPAGRDRGDRGPRDRGDRGGRGPDRGDS) show a composition bias toward basic and acidic residues.

This sequence belongs to the polyribonucleotide nucleotidyltransferase family. Requires Mg(2+) as cofactor.

It localises to the cytoplasm. It catalyses the reaction RNA(n+1) + phosphate = RNA(n) + a ribonucleoside 5'-diphosphate. Its function is as follows. Involved in mRNA degradation. Catalyzes the phosphorolysis of single-stranded polyribonucleotides processively in the 3'- to 5'-direction. In Salinispora tropica (strain ATCC BAA-916 / DSM 44818 / JCM 13857 / NBRC 105044 / CNB-440), this protein is Polyribonucleotide nucleotidyltransferase.